Reading from the N-terminus, the 239-residue chain is Phosphoribosylaminoimidazole-succinocarboxamide synthase (239 aa).

Belongs to the SAICAR synthetase family.

The enzyme catalyses 5-amino-1-(5-phospho-D-ribosyl)imidazole-4-carboxylate + L-aspartate + ATP = (2S)-2-[5-amino-1-(5-phospho-beta-D-ribosyl)imidazole-4-carboxamido]succinate + ADP + phosphate + 2 H(+). It participates in purine metabolism; IMP biosynthesis via de novo pathway; 5-amino-1-(5-phospho-D-ribosyl)imidazole-4-carboxamide from 5-amino-1-(5-phospho-D-ribosyl)imidazole-4-carboxylate: step 1/2. The polypeptide is Phosphoribosylaminoimidazole-succinocarboxamide synthase (Bacillus thuringiensis subsp. konkukian (strain 97-27)).